The primary structure comprises 421 residues: Serine hydroxymethyltransferase (421 aa).

(6S)-5,6,7,8-tetrahydrofolate is bound by residues leucine 123 and 127-129; that span reads GHL. At lysine 232 the chain carries N6-(pyridoxal phosphate)lysine.

It belongs to the SHMT family. Homodimer. It depends on pyridoxal 5'-phosphate as a cofactor.

It is found in the cytoplasm. The catalysed reaction is (6R)-5,10-methylene-5,6,7,8-tetrahydrofolate + glycine + H2O = (6S)-5,6,7,8-tetrahydrofolate + L-serine. The protein operates within one-carbon metabolism; tetrahydrofolate interconversion. Its pathway is amino-acid biosynthesis; glycine biosynthesis; glycine from L-serine: step 1/1. Catalyzes the reversible interconversion of serine and glycine with tetrahydrofolate (THF) serving as the one-carbon carrier. This reaction serves as the major source of one-carbon groups required for the biosynthesis of purines, thymidylate, methionine, and other important biomolecules. Also exhibits THF-independent aldolase activity toward beta-hydroxyamino acids, producing glycine and aldehydes, via a retro-aldol mechanism. This Ehrlichia canis (strain Jake) protein is Serine hydroxymethyltransferase.